The chain runs to 280 residues: Manganese transport system membrane protein MntC (280 aa).

Transmembrane regions (helical) follow at residues 16–36 (ALIT…FIIL), 41–61 (LMGD…YMMG), 62–82 (MNFF…IGFV), 92–112 (TAIG…ISFA), 137–157 (TIII…EFLV), 168–188 (YGLN…LVTV), 193–213 (TVGI…AYLL), 221–241 (IMLA…FSYI), and 244–264 (LASG…AFLF).

This sequence belongs to the ABC-3 integral membrane protein family.

The protein localises to the cell membrane. In terms of biological role, this protein is probably a component of a manganese permease, a binding protein-dependent, ATP-driven transport system. The chain is Manganese transport system membrane protein MntC (mntC) from Listeria innocua serovar 6a (strain ATCC BAA-680 / CLIP 11262).